Here is a 414-residue protein sequence, read N- to C-terminus: Coenzyme A biosynthesis bifunctional protein CoaBC (414 aa).

A phosphopantothenoylcysteine decarboxylase region spans residues 1–191; that stretch reads MSARKRIVVG…ALPYDMAGVK (191 aa). Residues 192 to 414 are phosphopantothenate--cysteine ligase; that stretch reads ALVTAGGTRE…IAAFLKSQDG (223 aa). CTP-binding positions include 275–277, Asp-281, Lys-291, 293–294, 308–311, Phe-332, Lys-350, and Lys-354; these read MAA, KK, and DDVL.

It in the N-terminal section; belongs to the HFCD (homo-oligomeric flavin containing Cys decarboxylase) superfamily. The protein in the C-terminal section; belongs to the PPC synthetase family. In terms of assembly, homododecamer. It depends on Mg(2+) as a cofactor. The cofactor is FMN.

It carries out the reaction N-[(R)-4-phosphopantothenoyl]-L-cysteine + H(+) = (R)-4'-phosphopantetheine + CO2. It catalyses the reaction (R)-4'-phosphopantothenate + L-cysteine + CTP = N-[(R)-4-phosphopantothenoyl]-L-cysteine + CMP + diphosphate + H(+). It participates in cofactor biosynthesis; coenzyme A biosynthesis; CoA from (R)-pantothenate: step 2/5. It functions in the pathway cofactor biosynthesis; coenzyme A biosynthesis; CoA from (R)-pantothenate: step 3/5. With respect to regulation, two related chemical scaffolds that potently inhibit the activity of the CoaB moiety of CoaBC through a cryptic allosteric site that sits in the dimer interface region of the CoaB enzyme were identified. In terms of biological role, catalyzes two sequential steps in the biosynthesis of coenzyme A. In the first step cysteine is conjugated to 4'-phosphopantothenate to form 4-phosphopantothenoylcysteine. In the second step the latter compound is decarboxylated to form 4'-phosphopantotheine. The polypeptide is Coenzyme A biosynthesis bifunctional protein CoaBC (Mycolicibacterium smegmatis (strain ATCC 700084 / mc(2)155) (Mycobacterium smegmatis)).